Reading from the N-terminus, the 412-residue chain is Dihydrolipoyllysine-residue acetyltransferase component of pyruvate dehydrogenase complex (412 aa).

The region spanning 2–78 is the Lipoyl-binding domain; it reads PIKILMPALS…PVNSLIAVLS (77 aa). At K43 the chain carries N6-lipoyllysine. Residues 132–169 form the Peripheral subunit-binding (PSBD) domain; sequence FASPLAKRLAKMRNIRFESVKGSGPHGRIVKQDILSYT. The active site involves H385.

The protein belongs to the 2-oxoacid dehydrogenase family. Forms a 24-polypeptide structural core with octahedral symmetry. (R)-lipoate serves as cofactor.

The enzyme catalyses N(6)-[(R)-dihydrolipoyl]-L-lysyl-[protein] + acetyl-CoA = N(6)-[(R)-S(8)-acetyldihydrolipoyl]-L-lysyl-[protein] + CoA. The pyruvate dehydrogenase complex catalyzes the overall conversion of pyruvate to acetyl-CoA and CO(2). It contains multiple copies of three enzymatic components: pyruvate dehydrogenase (E1), dihydrolipoamide acetyltransferase (E2) and lipoamide dehydrogenase (E3). The chain is Dihydrolipoyllysine-residue acetyltransferase component of pyruvate dehydrogenase complex (pdhC) from Rickettsia conorii (strain ATCC VR-613 / Malish 7).